A 57-amino-acid chain; its full sequence is Potassium channel toxin alpha-KTx 8.8 (57 aa).

A signal peptide spans 1-19 (MCRLYAIILIVLVMNVIMT). A propeptide spanning residues 20–28 (IIPDSKVEV) is cleaved from the precursor. Disulfide bonds link cysteine 31–cysteine 47, cysteine 34–cysteine 52, and cysteine 38–cysteine 54.

It belongs to the short scorpion toxin superfamily. Potassium channel inhibitor family. Alpha-KTx 08 subfamily. In terms of processing, contains 3 disulfide bonds. Expressed by the venom gland.

It is found in the secreted. Its function is as follows. Selectively inhibits voltage-gated potassium channels rKv1.2/KCNA2 (IC(50)=331 nM) and hKv1.3/KCNA3 (IC(50)=503 nM). Partially inihibts rKv1.6/KCNA6 (IC(50)=9983 nM). In Orthochirus scrobiculosus (Central Asian scorpion), this protein is Potassium channel toxin alpha-KTx 8.8.